A 687-amino-acid polypeptide reads, in one-letter code: A-kinase anchor protein 8 (687 aa).

Residues 1–195 are interaction with MCM2; sequence MEQSYGGYGA…FLRGRGQGRF (195 aa). The segment at 1 to 210 is interaction with DPY30; the sequence is MEQSYGGYGA…SSTFIRSDPF (210 aa). Serine 72 carries the phosphoserine modification. The tract at residues 104–124 is disordered; that stretch reads SKEGGRGGISSGGEGMQDRDS. Arginine 109 is modified (asymmetric dimethylarginine; alternate). Position 109 is an omega-N-methylarginine; alternate (arginine 109). Residues 109–118 are compositionally biased toward gly residues; that stretch reads RGGISSGGEG. The interaction with DDX5 stretch occupies residues 109–201; that stretch reads RGGISSGGEG…QGRFQDRSNS (93 aa). The segment at 127–152 is nuclear matrix targeting site; that stretch reads RFQPYESYDSRPCMPEHTPYRPSYSY. The segment at 189 to 221 is disordered; that stretch reads GRGQGRFQDRSNSSTFIRSDPFMPPSASSEPLS. Phosphoserine is present on serine 199. Residues arginine 233 and arginine 277 each carry the omega-N-methylarginine modification. The tract at residues 278-380 is disordered; the sequence is SQTRIRDWPR…KQRRRDRMRD (103 aa). Composition is skewed to basic and acidic residues over residues 281–295 and 312–321; these read RIRD…ERFG and PDAKLARADS. Residues 287-304 carry the Bipartite nuclear localization signal motif; the sequence is RRRGFERFGPDNMGRKRK. A Glycyl lysine isopeptide (Lys-Gly) (interchain with G-Cter in SUMO2) cross-link involves residue lysine 315. A phosphoserine mark is found at serine 321, serine 326, and serine 337. Residues 322–332 are compositionally biased toward acidic residues; that stretch reads EGDLSENDDGA. Basic and acidic residues predominate over residues 336–358; the sequence is RSGDEEFRGEDDLCDSRKQRGEK. The tract at residues 385–448 is involved in chromatin-binding; that stretch reads RIQFACSVCK…NKKIEKRRQE (64 aa). 2 C2H2 AKAP95-type zinc fingers span residues 390–412 and 479–502; these read CSVC…SKFH and CLAC…SVDH. Positions 523-565 are involved in condensin complex recruitment; the sequence is SVLNNKHIVKMLEKYLKGEDPFVNETADLETEGDENLGEEKET. A Phosphothreonine modification is found at threonine 553. A Glycyl lysine isopeptide (Lys-Gly) (interchain with G-Cter in SUMO2) cross-link involves residue lysine 563. The tract at residues 568-585 is RII-binding; that stretch reads EVAAEVLAEVITAAVKAV. The interval 572–589 is required for interaction with MYCBP; that stretch reads EVLAEVITAAVKAVEGDG. The tract at residues 606–687 is disordered; it reads VDTAEAGSDS…DAEAKDTPTE (82 aa). Residues 633–648 are compositionally biased toward basic and acidic residues; that stretch reads RNMEDMARGEAAEARN. Residues 649–666 are compositionally biased toward low complexity; sequence EAAVPAAAAGSPVPVIAI. Serine 659 carries the post-translational modification Phosphoserine.

This sequence belongs to the AKAP95 family. In terms of assembly, binds to dimeric RII-alpha regulatory subunit of PKA during mitosis. Interacts (via C-terminus) with FIGN. Interacts with NCAPD2, CCND1, CCND3, MCM2, RPS6KA1, PDE4A, CASP3. Interacts with DDX5, CCNE1. Interacts with NFKB1; detetcted in the cytoplasm. Interacts with MYCBP; MYCBP is translocated to the nucleus and the interaction prevents the association of the PKA catalytic subunit leading to suppression of PKA activity. Interacts with DPY30; mediating AKAP8 association with at least the MLL4/WBP7 HMT complex. Interacts with HDAC3; increased during mitosis. Interacts with GJA1; in the nucleus and in the nuclear membrane; the nuclear association increases with progress of cell cycle G1, S and G2 phase and decreases in M phase. Post-translationally, phosphorylated on tyrosine residues probably by SRC subfamily protein kinases; multiple phosphorylation is leading to dissociation from nuclear structures implicated in chromatin structural changes. As to expression, widely expressed. The protein has been detected in liver, fibroblasts, granulosa, myoblast, lymphoma and Sertoli cells.

It is found in the nucleus matrix. The protein resides in the nucleus. Its subcellular location is the nucleolus. The protein localises to the cytoplasm. Functionally, anchoring protein that mediates the subcellular compartmentation of cAMP-dependent protein kinase (PKA type II). Acts as an anchor for a PKA-signaling complex onto mitotic chromosomes, which is required for maintenance of chromosomes in a condensed form throughout mitosis. Recruits condensin complex subunit NCAPD2 to chromosomes required for chromatin condensation; the function appears to be independent from PKA-anchoring. May help to deliver cyclin D/E to CDK4 to facilitate cell cycle progression. Required for cell cycle G2/M transition and histone deacetylation during mitosis. In mitotic cells recruits HDAC3 to the vicinity of chromatin leading to deacetylation and subsequent phosphorylation at 'Ser-10' of histone H3; in this function may act redundantly with AKAP8L. Involved in nuclear retention of RPS6KA1 upon ERK activation thus inducing cell proliferation. May be involved in regulation of DNA replication by acting as scaffold for MCM2. Enhances HMT activity of the KMT2 family MLL4/WBP7 complex and is involved in transcriptional regulation. In a teratocarcinoma cell line is involved in retinoic acid-mediated induction of developmental genes implicating H3 'Lys-4' methylation. May be involved in recruitment of active CASP3 to the nucleus in apoptotic cells. May act as a carrier protein of GJA1 for its transport to the nucleus. May play a repressive role in the regulation of rDNA transcription. Preferentially binds GC-rich DNA in vitro. In cells, associates with ribosomal RNA (rRNA) chromatin, preferentially with rRNA promoter and transcribed regions. Involved in modulation of Toll-like receptor signaling. Required for the cAMP-dependent suppression of TNF-alpha in early stages of LPS-induced macrophage activation; the function probably implicates targeting of PKA to NFKB1. The polypeptide is A-kinase anchor protein 8 (Akap8) (Rattus norvegicus (Rat)).